Consider the following 2146-residue polypeptide: Phospholipid-transporting ATPase ABCA7 (2146 aa).

The chain crosses the membrane as a helical span at residues 22-42 (PVQLLVELLWPLFLFFILVAV). Topologically, residues 43 to 549 (RHSHPPLEHH…DVFLRVLSRS (507 aa)) are extracellular. Cysteine 75 and cysteine 225 are disulfide-bonded. Asparagine 312 is a glycosylation site (N-linked (GlcNAc...) asparagine). 6 consecutive transmembrane segments (helical) span residues 550 to 570 (LPLF…KAVV), 593 to 613 (LGWF…LVLV), 626 to 646 (GVVF…SFLL), 655 to 675 (LAAA…VLCV), 687 to 707 (VAAS…LALL), and 727 to 747 (VFSL…YGLA). An ABC transporter 1 domain is found at 807–1038 (VSVRSLEKRF…LGSGYYLTLV (232 aa)). ATP is bound at residue 841–848 (GHNGAGKT). Residues 849–869 (TTLSILSGLFPPSGGSAFILG) form a helical membrane-spanning segment. A compositionally biased stretch (basic and acidic residues) spans 1048-1066 (EKADTDMEGSVDTRQEKKN). Disordered regions lie at residues 1048–1072 (EKAD…QGSR) and 1185–1209 (TALE…DAVG). Residues 1243–1263 (IVLPALFVGLALVFSLIVPPF) form a helical membrane-spanning segment. The Extracellular segment spans residues 1264-1537 (GHYPALRLSP…ALMASSVDVL (274 aa)). An intrachain disulfide couples cysteine 1345 to cysteine 1359. Helical transmembrane passes span 1538–1558 (VSIC…LVLI), 1584–1604 (FLWD…IFLA), 1621–1641 (LLLL…SFFF), 1649–1669 (VVLT…TFVL), 1683–1703 (ILKQ…LIDM), and 1729–1749 (VVGK…LFTL). Residues 1793 to 2025 (LVLRNLTKVY…FAAGHTLTLR (233 aa)) enclose the ABC transporter 2 domain. ATP is bound at residue 1827–1834 (GVNGAGKT). Positions 2104–2146 (QGKDEDTEEQKEAGVGVDPAPGLQHPKRVSQFLDDPSTAETVL) are disordered.

Belongs to the ABC transporter superfamily. ABCA family. Post-translationally, N-glycosylated. Expressed in leukocytes (at protein level). Widely expressed. Highly expressed in myelo-lymphatic tissues including peripheral leukocytes, thymus, spleen and bone marrow. Expressed in the hippocampus and the cerebellum. Isoform 2: Abundant in lymph node, spleen, thymus and trachea. Isoform 1: Strongly expressed in brain and bone marrow.

It localises to the cell membrane. It is found in the golgi apparatus membrane. Its subcellular location is the early endosome membrane. The protein resides in the cytoplasm. The protein localises to the cell projection. It localises to the ruffle membrane. It is found in the phagocytic cup. Its subcellular location is the endoplasmic reticulum. The catalysed reaction is ATP + H2O + phospholipidSide 1 = ADP + phosphate + phospholipidSide 2.. It carries out the reaction a 1,2-diacyl-sn-glycero-3-phosphocholine(out) + ATP + H2O = a 1,2-diacyl-sn-glycero-3-phosphocholine(in) + ADP + phosphate + H(+). It catalyses the reaction a 1,2-diacyl-sn-glycero-3-phospho-L-serine(out) + ATP + H2O = a 1,2-diacyl-sn-glycero-3-phospho-L-serine(in) + ADP + phosphate + H(+). With respect to regulation, ATPase activity is decreased by cholesterol and ceramide. ATPase activity is stimulated by phosphatidylserine, phosphatidylcholine and sphingomyelin, but phosphatidylserine is more effective. Functionally, catalyzes the translocation of specific phospholipids from the cytoplasmic to the extracellular/lumenal leaflet of membrane coupled to the hydrolysis of ATP. Transports preferentially phosphatidylserine over phosphatidylcholine. Plays a role in lipid homeostasis and macrophage-mediated phagocytosis. Binds APOA1 and may function in apolipoprotein-mediated phospholipid efflux from cells. May also mediate cholesterol efflux. May regulate cellular ceramide homeostasis during keratinocyte differentiation. Involved in lipid raft organization and CD1D localization on thymocytes and antigen-presenting cells, which plays an important role in natural killer T-cell development and activation. Plays a role in phagocytosis of apoptotic cells by macrophages. Macrophage phagocytosis is stimulated by APOA1 or APOA2, probably by stabilization of ABCA7. Also involved in phagocytic clearance of amyloid-beta by microglia cells and macrophages. Further limits amyloid-beta production by playing a role in the regulation of amyloid-beta A4 precursor protein (APP) endocytosis and/or processing. Amyloid-beta is the main component of amyloid plaques found in the brains of Alzheimer patients. This Homo sapiens (Human) protein is Phospholipid-transporting ATPase ABCA7.